A 2220-amino-acid polypeptide reads, in one-letter code: Calcineurin-binding protein cabin-1 (2220 aa).

Phosphoserine is present on residues S10 and S11. T12 carries the phosphothreonine modification. Phosphoserine occurs at positions 20 and 66. TPR repeat units follow at residues 36-69, 90-123, and 125-157; these read AFAL…SLLR, YSTY…DSTD, and NLWY…NPDH. Residues 361 to 400 are disordered; it reads GAPVGDISGGDKSKKGVKRKKISEESGETAKRRSARVRNT. Over residues 382 to 391 the composition is skewed to basic and acidic residues; sequence ISEESGETAK. Residues S433 and S450 each carry the phosphoserine modification. One copy of the TPR 4 repeat lies at 615-648; the sequence is VRVYWLKARFLALQGDMEQALENYDICTEMLQSS. The residue at position 673 (S673) is a Phosphoserine. TPR repeat units follow at residues 1055 to 1088 and 1106 to 1139; these read NELY…CPNR and KLNS…DSSN. 4 disordered regions span residues 1299 to 1476, 1668 to 1845, 1916 to 2165, and 2197 to 2220; these read FARG…STPT, AEGS…RLSR, AQRQ…GSIS, and VLET…YMDI. The span at 1301-1324 shows a compositional bias: basic and acidic residues; that stretch reads RGEEKNTPKASEKEKACLVDEDSH. Over residues 1327-1349 the composition is skewed to low complexity; that stretch reads AGTLPGPGASLPSSSGPGLTSPP. The segment covering 1377–1397 has biased composition (polar residues); sequence DSTAVALSDSSSTQDFFNEPT. Residues 1402–1412 show a composition bias toward basic and acidic residues; sequence GSRKSYTEKRL. A Phosphoserine modification is found at S1439. Residues 1715 to 1725 are compositionally biased toward gly residues; that stretch reads SGPGPEPGGKV. Basic and acidic residues-rich tracts occupy residues 1744 to 1753 and 1784 to 1794; these read SGERKDKESP and PARDRGPESRP. A compositionally biased stretch (pro residues) spans 1812 to 1823; that stretch reads PLTPAQPAPAPA. Composition is skewed to polar residues over residues 1918–1927 and 1975–1989; these read RQASGDTPTT and TIIT…STLD. At T1924 the chain carries Phosphothreonine. Residues 2070–2081 show a composition bias toward basic and acidic residues; it reads GKLRPEPRRDGE. A compositionally biased stretch (low complexity) spans 2091–2112; it reads PLSSPPTAASSKAPSSGSAQPP. S2094 carries the phosphoserine modification. The tract at residues 2116–2153 is required for interaction with calcineurin; it reads PGKPEPSRAKSRPLPNMPKLVIPSAATKFPPEITVTPP. A phosphothreonine mark is found at T2151 and T2154. The segment covering 2207-2220 has biased composition (acidic residues); that stretch reads LESETDEDDDYMDI.

Component of a complex that includes at least ASF1A, CABIN1, HIRA, histone H3.3 and UBN1. Interacts with calcineurin. Interacts with MEF2B. Post-translationally, activated through PKC-mediated hyperphosphorylation. Phosphorylation by the DNA damage kinases ATM and CHK2 enhances ubiquitination. In terms of processing, upon genotoxic stress, ubiquitination by the DCX(DDB2) E3 ubiquitin-protein ligase complex targets CABIN1 for proteasomal degradation, leading to the release of p53/TP53. As to expression, widely expressed in different tissues.

The protein localises to the nucleus. May be required for replication-independent chromatin assembly. May serve as a negative regulator of T-cell receptor (TCR) signaling via inhibition of calcineurin. Inhibition of activated calcineurin is dependent on both PKC and calcium signals. Acts as a negative regulator of p53/TP53 by keeping p53 in an inactive state on chromatin at promoters of a subset of it's target genes. The sequence is that of Calcineurin-binding protein cabin-1 (CABIN1) from Homo sapiens (Human).